The primary structure comprises 387 residues: Succinate--CoA ligase [ADP-forming] subunit beta (387 aa).

Residues Arg9–Lys236 enclose the ATP-grasp domain. ATP is bound by residues Lys45, Gly52–Gly54, Ala94, and Glu99. Mg(2+) contacts are provided by Asn191 and Asp205. Substrate-binding positions include Asn256 and Gly318–Thr320.

Belongs to the succinate/malate CoA ligase beta subunit family. In terms of assembly, heterotetramer of two alpha and two beta subunits. The cofactor is Mg(2+).

It catalyses the reaction succinate + ATP + CoA = succinyl-CoA + ADP + phosphate. The catalysed reaction is GTP + succinate + CoA = succinyl-CoA + GDP + phosphate. The protein operates within carbohydrate metabolism; tricarboxylic acid cycle; succinate from succinyl-CoA (ligase route): step 1/1. Its function is as follows. Succinyl-CoA synthetase functions in the citric acid cycle (TCA), coupling the hydrolysis of succinyl-CoA to the synthesis of either ATP or GTP and thus represents the only step of substrate-level phosphorylation in the TCA. The beta subunit provides nucleotide specificity of the enzyme and binds the substrate succinate, while the binding sites for coenzyme A and phosphate are found in the alpha subunit. In Clavibacter michiganensis subsp. michiganensis (strain NCPPB 382), this protein is Succinate--CoA ligase [ADP-forming] subunit beta.